The following is a 316-amino-acid chain: Pantothenate kinase (316 aa).

95-102 provides a ligand contact to ATP; that stretch reads GSVAVGKS.

It belongs to the prokaryotic pantothenate kinase family.

It is found in the cytoplasm. It catalyses the reaction (R)-pantothenate + ATP = (R)-4'-phosphopantothenate + ADP + H(+). It functions in the pathway cofactor biosynthesis; coenzyme A biosynthesis; CoA from (R)-pantothenate: step 1/5. This is Pantothenate kinase from Shewanella baltica (strain OS223).